The sequence spans 843 residues: Translation initiation factor IF-2 (843 aa).

Disordered regions lie at residues 55–185 and 209–228; these read AEAV…EDRD and KVEE…QVKV. A compositionally biased stretch (basic and acidic residues) spans 62 to 106; sequence PQEKPKKSAPKKEEKPKEEVKKEAEEKVAASKKEEEKPQEKKSVE. The segment covering 114 to 128 has biased composition (basic residues); that stretch reads LKKRRGLVIVKKKRP. Over residues 129 to 141 the composition is skewed to basic and acidic residues; sequence KVEPKVEEKEAKQ. Over residues 156 to 165 the composition is skewed to basic residues; the sequence is LKRKPKKAKK. 2 stretches are compositionally biased toward basic and acidic residues: residues 171-185 and 209-221; these read KKNE…EDRD and KVEE…EPQK. Residues 342–511 form the tr-type G domain; that stretch reads ERPPVITIMG…LLQAEIMELK (170 aa). Residues 351–358 are G1; sequence GHVDHGKT. Residue 351-358 participates in GTP binding; that stretch reads GHVDHGKT. A G2 region spans residues 376–380; the sequence is GITQH. The tract at residues 397 to 400 is G3; sequence DTPG. GTP is bound by residues 397–401 and 451–454; these read DTPGH and NKID. Positions 451 to 454 are G4; sequence NKID. Residues 487 to 489 are G5; it reads SAK.

The protein belongs to the TRAFAC class translation factor GTPase superfamily. Classic translation factor GTPase family. IF-2 subfamily.

The protein resides in the cytoplasm. Its function is as follows. One of the essential components for the initiation of protein synthesis. Protects formylmethionyl-tRNA from spontaneous hydrolysis and promotes its binding to the 30S ribosomal subunits. Also involved in the hydrolysis of GTP during the formation of the 70S ribosomal complex. The sequence is that of Translation initiation factor IF-2 from Nitratiruptor sp. (strain SB155-2).